The following is a 385-amino-acid chain: 8-amino-7-oxononanoate synthase (385 aa).

Substrate is bound at residue Arg21. 108–109 is a pyridoxal 5'-phosphate binding site; it reads GF. Substrate is bound at residue His133. Pyridoxal 5'-phosphate-binding residues include Ser179, His207, and Thr233. Lys236 carries the N6-(pyridoxal phosphate)lysine modification. Thr352 is a substrate binding site.

The protein belongs to the class-II pyridoxal-phosphate-dependent aminotransferase family. BioF subfamily. Homodimer. Pyridoxal 5'-phosphate is required as a cofactor.

The catalysed reaction is 6-carboxyhexanoyl-[ACP] + L-alanine + H(+) = (8S)-8-amino-7-oxononanoate + holo-[ACP] + CO2. Its pathway is cofactor biosynthesis; biotin biosynthesis. In terms of biological role, catalyzes the decarboxylative condensation of pimeloyl-[acyl-carrier protein] and L-alanine to produce 8-amino-7-oxononanoate (AON), [acyl-carrier protein], and carbon dioxide. The protein is 8-amino-7-oxononanoate synthase of Klebsiella pneumoniae subsp. pneumoniae (strain ATCC 700721 / MGH 78578).